The sequence spans 127 residues: Large ribosomal subunit protein bL21 (127 aa).

The disordered stretch occupies residues 102-127 (TDNAKPTKGPRPKKAKAEAPAADAAE).

Belongs to the bacterial ribosomal protein bL21 family. In terms of assembly, part of the 50S ribosomal subunit. Contacts protein L20.

This protein binds to 23S rRNA in the presence of protein L20. The protein is Large ribosomal subunit protein bL21 of Bradyrhizobium sp. (strain BTAi1 / ATCC BAA-1182).